A 327-amino-acid polypeptide reads, in one-letter code: Malate dehydrogenase (327 aa).

12 to 18 lines the NAD(+) pocket; the sequence is GAAGQIG. Substrate contacts are provided by Arg-93 and Arg-99. NAD(+) contacts are provided by residues Asn-106, Gln-113, and 130–132; that span reads VGN. Asn-132 and Arg-163 together coordinate substrate. His-188 acts as the Proton acceptor in catalysis.

It belongs to the LDH/MDH superfamily. MDH type 2 family.

The catalysed reaction is (S)-malate + NAD(+) = oxaloacetate + NADH + H(+). Its function is as follows. Catalyzes the reversible oxidation of malate to oxaloacetate. The chain is Malate dehydrogenase from Paraburkholderia phymatum (strain DSM 17167 / CIP 108236 / LMG 21445 / STM815) (Burkholderia phymatum).